Here is a 566-residue protein sequence, read N- to C-terminus: MKSKSIMAASTVMELALAQASADPLCSTIINLQPIEYQFQQPVLIDSYFPANTDIVLDDGHVVHVTNAPTSLSTVLTDVSTSSTTLTSSASNGNGNPPDGGYLTFTVPANPDDIGNHPVTKTYPPTEPGQPGIVVIQVPTSPPGADGIPTSSVPYVTVTTTGDFPSLTGPVTTTVTPGEPGATGSVIIEVPNTKITSPSASYVTVTTPGSVAPTDAPRTSTIPPSNPTDPGTVIVVVPSSQASSVSSIPFVTVTTTGSTLNPTDDPITSTISPSGSTGSGTVIVEVPPSSSPSGSGASSSPVSVVTRTVTGDDGNGEPSTTTITPTASSGPGTVIVEVPPPTNSPSATSPGSSRPGGPGSSGTGSSASQGPSDSAALSSSTGDAGPSSSVPETSSPSRATTDDAASSTSASAPASSSAASSITQSETPSSAGAETSTPATSPASSSAPSTSDADTSSPVNPTTSSPASSAATSAPGSSTESAPSSSTSSAAANFDPCPDSLYGNPQCCSVDVLGVADVECDSPTESPTDADNFQAICAASGQRARCCVLPVLGQALVCLTPVGVSN.

A signal peptide spans 1–22 (MKSKSIMAASTVMELALAQASA). 4 disulfides stabilise this stretch: Cys-497/Cys-546, Cys-507/Cys-537, Cys-508/Cys-520, and Cys-547/Cys-558.

Belongs to the cerato-ulmin hydrophobin family. As to quaternary structure, homodimer. Homodimers further self-assemble to form highly ordered films at water-air interfaces through intermolecular interactions.

It localises to the secreted. It is found in the cell wall. In terms of biological role, aerial growth, conidiation, and dispersal of filamentous fungi in the environment rely upon a capability of their secreting small amphipathic proteins called hydrophobins (HPBs) with low sequence identity. Class I can self-assemble into an outermost layer of rodlet bundles on aerial cell surfaces, conferring cellular hydrophobicity that supports fungal growth, development and dispersal; whereas Class II form highly ordered films at water-air interfaces through intermolecular interactions but contribute nothing to the rodlet structure. FOXG_02748 is a class II hydrophobin that is likely required for plant colonization. The sequence is that of Class II hydrophobin FOXG_02748 from Fusarium oxysporum f. sp. lycopersici (strain 4287 / CBS 123668 / FGSC 9935 / NRRL 34936) (Fusarium vascular wilt of tomato).